Consider the following 91-residue polypeptide: uncharacterized protein (91 aa).

Positions 1 to 21 (MKQLLASPSLQLVTYPASATA) are cleaved as a signal peptide.

The protein belongs to the BhsA/McbA family.

The protein resides in the periplasm. This is an uncharacterized protein from Escherichia coli O157:H7.